The following is a 567-amino-acid chain: Oxygen-dependent choline dehydrogenase (567 aa).

6 to 35 serves as a coordination point for FAD; that stretch reads DYIIVGAGSAGNTLATRLTEDEGVTVLLLE. The active-site Proton acceptor is the His475.

It belongs to the GMC oxidoreductase family. Requires FAD as cofactor.

The enzyme catalyses choline + A = betaine aldehyde + AH2. The catalysed reaction is betaine aldehyde + NAD(+) + H2O = glycine betaine + NADH + 2 H(+). It participates in amine and polyamine biosynthesis; betaine biosynthesis via choline pathway; betaine aldehyde from choline (cytochrome c reductase route): step 1/1. Its function is as follows. Involved in the biosynthesis of the osmoprotectant glycine betaine. Catalyzes the oxidation of choline to betaine aldehyde and betaine aldehyde to glycine betaine at the same rate. This chain is Oxygen-dependent choline dehydrogenase, found in Pseudomonas fluorescens (strain SBW25).